The sequence spans 341 residues: uncharacterized protein (341 aa).

Residues 125 to 146 (DTVKHNGSGPRPEQASSHVHYS) form a disordered region.

It belongs to the cycloisomerase 2 family.

This is an uncharacterized protein from Lactococcus lactis subsp. cremoris (strain MG1363).